The following is a 548-amino-acid chain: Chaperonin GroEL 2 (548 aa).

Residues 29–32 (TLGP), 86–90 (DGTTT), G418, 482–484 (NAA), and D498 each bind ATP.

Belongs to the chaperonin (HSP60) family. As to quaternary structure, forms a cylinder of 14 subunits composed of two heptameric rings stacked back-to-back. Interacts with the co-chaperonin GroES.

Its subcellular location is the cytoplasm. The enzyme catalyses ATP + H2O + a folded polypeptide = ADP + phosphate + an unfolded polypeptide.. Together with its co-chaperonin GroES, plays an essential role in assisting protein folding. The GroEL-GroES system forms a nano-cage that allows encapsulation of the non-native substrate proteins and provides a physical environment optimized to promote and accelerate protein folding. The sequence is that of Chaperonin GroEL 2 from Corynebacterium glutamicum (strain ATCC 13032 / DSM 20300 / JCM 1318 / BCRC 11384 / CCUG 27702 / LMG 3730 / NBRC 12168 / NCIMB 10025 / NRRL B-2784 / 534).